A 397-amino-acid chain; its full sequence is N(6)-adenosine-methyltransferase non-catalytic subunit METTL14 (397 aa).

Disordered regions lie at residues 37–67 (NAEDINSSRQLNSGGQREEEDGGASSSKKTP) and 368–397 (ELLRPKSPPPNSKVLRGRGRGFPRGRGRPR). Over residues 40–51 (DINSSRQLNSGG) the composition is skewed to polar residues. Residues 382 to 397 (LRGRGRGFPRGRGRPR) show a composition bias toward basic residues.

It belongs to the MT-A70-like family. In terms of assembly, component of the WMM complex, a N6-methyltransferase complex composed of a catalytic subcomplex, named MAC, and of an associated subcomplex, named MACOM. The MAC subcomplex is composed of Ime4/Mettl3 and Mettl14. The MACOM subcomplex is composed of fl(2)d, Flacc/Xio, Hakai, vir, and, in some cases of nito.

It is found in the nucleus. Functionally, non-catalytic component of the WMM complex, a complex that mediates N6-methyladenosine (m6A) methylation of mRNAs, a modification that plays a role in the efficiency of mRNA splicing and is required for sex determination. In the heterodimer formed with Ime4/Mettl3, Mettl14 constitutes the RNA-binding scaffold that recognizes the substrate rather than the catalytic core. Required for sex determination and dosage compensation via Sxl alternative splicing: m6A methylation acts as a key regulator of Sxl pre-mRNA and promotes female-specific alternative splicing of Sxl, which determines female physiognomy. M6A methylation is also required for neuronal functions. This chain is N(6)-adenosine-methyltransferase non-catalytic subunit METTL14, found in Drosophila melanogaster (Fruit fly).